A 296-amino-acid polypeptide reads, in one-letter code: uncharacterized protein (296 aa).

Helical transmembrane passes span 10-29 (FSTL…FSLL), 36-58 (YIVL…YYIL), 112-131 (FFAL…MFVT), 188-210 (ILIF…LYLR), 241-260 (MMYG…SAYF), and 273-295 (MYIS…VTYI).

The protein resides in the cell membrane. This is an uncharacterized protein from Clostridium acetobutylicum (strain ATCC 824 / DSM 792 / JCM 1419 / IAM 19013 / LMG 5710 / NBRC 13948 / NRRL B-527 / VKM B-1787 / 2291 / W).